The following is a 64-amino-acid chain: Toxin BmKIT3 (64 aa).

Residues 1–61 (DGYIRGSNGC…TWKSESNTCG (61 aa)) enclose the LCN-type CS-alpha/beta domain. 4 disulfides stabilise this stretch: Cys10–Cys60, Cys14–Cys35, Cys21–Cys42, and Cys25–Cys44. Cys60 is modified (cysteine amide).

Belongs to the long (4 C-C) scorpion toxin superfamily. Sodium channel inhibitor family. Beta subfamily. Expressed by the venom gland.

Its subcellular location is the secreted. In terms of biological role, depressant insect beta-toxins cause a transient contraction paralysis followed by a slow flaccid paralysis. They bind voltage-independently at site-4 of sodium channels (Nav) and shift the voltage of activation toward more negative potentials thereby affecting sodium channel activation and promoting spontaneous and repetitive firing. The protein is Toxin BmKIT3 of Olivierus martensii (Manchurian scorpion).